The primary structure comprises 530 residues: Ubiquitin carboxyl-terminal hydrolase 17 (530 aa).

The 296-residue stretch at 80–375 (AGLQNMGNTC…QAYVLFYIQK (296 aa)) folds into the USP domain. Cys89 (nucleophile) is an active-site residue. The active-site Proton acceptor is the His334. Composition is skewed to basic and acidic residues over residues 382 to 392 (SESVSRGREPR) and 398 to 413 (DTDRRATQGELKRDHP). 2 disordered regions span residues 382-416 (SESVSRGREPRALGAEDTDRRATQGELKRDHPCLQ) and 490-530 (SSTT…LVCQ). Residues 399 to 530 (TDRRATQGEL…HSKRALLVCQ (132 aa)) are mediates interaction with SUDS3. The segment covering 498–510 (ESVNTGTLASLQG) has biased composition (polar residues). Residues 511–524 (RTRRSKGKNKHSKR) are compositionally biased toward basic residues.

Belongs to the peptidase C19 family. USP17 subfamily. Interacts with SUDS3; the interaction is direct. In terms of tissue distribution, broadly expressed.

Its subcellular location is the nucleus. It is found in the endoplasmic reticulum. The catalysed reaction is Thiol-dependent hydrolysis of ester, thioester, amide, peptide and isopeptide bonds formed by the C-terminal Gly of ubiquitin (a 76-residue protein attached to proteins as an intracellular targeting signal).. Deubiquitinating enzyme that removes conjugated ubiquitin from specific proteins to regulate different cellular processes. Regulates cell proliferation by deubiquitinating and inhibiting RCE1 thereby controlling the small GTPases NRAS and HRAS localization and activation. In parallel, mediates deubiquitination of CDC25A, preventing CDC25A degradation by the proteasome during the G1/S and G2/M phases promoting cell-cycle progression. Also regulates cell proliferation and apoptosis through deubiquitination of SUDS3 a regulator of histone deacetylation. Through activation of the Rho family GTPases RAC1A, CDC42 and RHOA, regulates cell migration. Through the cleavage of 'Lys-48'- and 'Lys-63'-linked polyubiquitin chains of the cytoplasmic innate immune receptors RIGI and IFIH1 stimulates the cellular response to viral infection. The protein is Ubiquitin carboxyl-terminal hydrolase 17 (USP17L2) of Homo sapiens (Human).